The sequence spans 71 residues: Small ribosomal subunit protein bS21 (71 aa).

The span at 50 to 59 (AAAVKRHAKK) shows a compositional bias: basic residues. The disordered stretch occupies residues 50-71 (AAAVKRHAKKVQREQRRAVRLY). Residues 60–71 (VQREQRRAVRLY) show a composition bias toward basic and acidic residues.

It belongs to the bacterial ribosomal protein bS21 family.

This chain is Small ribosomal subunit protein bS21, found in Pseudomonas fluorescens (strain ATCC BAA-477 / NRRL B-23932 / Pf-5).